The following is a 261-amino-acid chain: [LysW]-aminoadipate/[LysW]-glutamate kinase (261 aa).

Substrate contacts are provided by residues 35 to 36 (GG), Arg62, and Asn166.

It belongs to the acetylglutamate kinase family. LysZ subfamily.

The protein resides in the cytoplasm. The catalysed reaction is [amino-group carrier protein]-C-terminal-N-(1,4-dicarboxybutan-1-yl)-L-glutamine + ATP = [amino-group carrier protein]-C-terminal-N-(1-carboxy-5-phosphooxy-5-oxopentan-1-yl)-L-glutamine + ADP. It carries out the reaction [amino-group carrier protein]-C-terminal-gamma-(L-glutamyl)-L-glutamate + ATP = [amino-group carrier protein]-C-terminal-gamma-(5-phospho-L-glutamyl)-L-glutamate + ADP. It functions in the pathway amino-acid biosynthesis; L-lysine biosynthesis via AAA pathway; L-lysine from L-alpha-aminoadipate (Thermus route): step 2/5. The protein operates within amino-acid biosynthesis; L-arginine biosynthesis. In terms of biological role, involved in both the arginine and lysine biosynthetic pathways. Phosphorylates the LysW-bound precursors glutamate (for arginine biosynthesis), respectively alpha-aminoadipate (for lysine biosynthesis). This Sulfolobus acidocaldarius (strain ATCC 33909 / DSM 639 / JCM 8929 / NBRC 15157 / NCIMB 11770) protein is [LysW]-aminoadipate/[LysW]-glutamate kinase.